A 508-amino-acid polypeptide reads, in one-letter code: Anthranilate synthase component 1 (508 aa).

L-tryptophan-binding positions include Ser-51 and 283–285 (PYM). Residue 323–324 (GT) coordinates chorismate. Position 350 (Glu-350) interacts with Mg(2+). Residues Tyr-438, Arg-458, 477–479 (GAG), and Gly-479 each bind chorismate. Residue Glu-492 participates in Mg(2+) binding.

The protein belongs to the anthranilate synthase component I family. Heterotetramer consisting of two non-identical subunits: a beta subunit (TrpG) and a large alpha subunit (TrpE). It depends on Mg(2+) as a cofactor.

The enzyme catalyses chorismate + L-glutamine = anthranilate + pyruvate + L-glutamate + H(+). The protein operates within amino-acid biosynthesis; L-tryptophan biosynthesis; L-tryptophan from chorismate: step 1/5. Feedback inhibited by tryptophan. In terms of biological role, part of a heterotetrameric complex that catalyzes the two-step biosynthesis of anthranilate, an intermediate in the biosynthesis of L-tryptophan. In the first step, the glutamine-binding beta subunit (TrpG) of anthranilate synthase (AS) provides the glutamine amidotransferase activity which generates ammonia as a substrate that, along with chorismate, is used in the second step, catalyzed by the large alpha subunit of AS (TrpE) to produce anthranilate. In the absence of TrpG, TrpE can synthesize anthranilate directly from chorismate and high concentrations of ammonia. The chain is Anthranilate synthase component 1 (trpE) from Synechocystis sp. (strain ATCC 27184 / PCC 6803 / Kazusa).